We begin with the raw amino-acid sequence, 24 residues long: SAKDVKFGDSARSMMIAGVNVIAD.

This sequence belongs to the chaperonin (HSP60) family. In terms of assembly, forms a cylinder of 14 subunits composed of two heptameric rings stacked back-to-back. Interacts with the co-chaperonin GroES.

Its subcellular location is the cytoplasm. The catalysed reaction is ATP + H2O + a folded polypeptide = ADP + phosphate + an unfolded polypeptide.. Together with its co-chaperonin GroES, plays an essential role in assisting protein folding. The GroEL-GroES system forms a nano-cage that allows encapsulation of the non-native substrate proteins and provides a physical environment optimized to promote and accelerate protein folding. This is Chaperonin GroEL from Acinetobacter calcoaceticus.